We begin with the raw amino-acid sequence, 358 residues long: 2'-5'-oligoadenylate synthase 1A (358 aa).

Residues 14 to 61 (DKFIEVYLLPNTSFRDDVKSAINVLCDFLKERCFRDTVHPVRVSKVVK) are interaction with dsRNA. Residue Ser64 participates in ATP binding. Residues Asp76, Asp78, and Asp149 each contribute to the Mg(2+) site. Residues 201-211 (QRPTKLKSLIR) form an interaction with dsRNA region. Positions 211, 214, and 231 each coordinate ATP.

Belongs to the 2-5A synthase family. As to quaternary structure, monomer. Homotetramer. Interacts with OAS1D. Mg(2+) serves as cofactor.

It is found in the cytoplasm. The protein resides in the mitochondrion. Its subcellular location is the nucleus. It localises to the microsome. The protein localises to the endoplasmic reticulum. The catalysed reaction is 3 ATP = 5'-triphosphoadenylyl-(2'-&gt;5')-adenylyl-(2'-&gt;5')-adenosine + 2 diphosphate. Its activity is regulated as follows. Produced as a latent enzyme which is activated by dsRNA generated during the course of viral infection. The dsRNA activator must be at least 15 nucleotides long, and no modification of the 2'-hydroxyl group is tolerated. ssRNA or dsDNA do not act as activators. In terms of biological role, interferon-induced, dsRNA-activated antiviral enzyme which plays a critical role in cellular innate antiviral response. In addition, it may also play a role in other cellular processes such as apoptosis, cell growth, differentiation and gene regulation. Synthesizes higher oligomers of 2'-5'-oligoadenylates (2-5A) from ATP which then bind to the inactive monomeric form of ribonuclease L (RNase L) leading to its dimerization and subsequent activation. Activation of RNase L leads to degradation of cellular as well as viral RNA, resulting in the inhibition of protein synthesis, thus terminating viral replication. Can mediate the antiviral effect via the classical RNase L-dependent pathway or an alternative antiviral pathway independent of RNase L. The protein is 2'-5'-oligoadenylate synthase 1A (Oas1a) of Rattus norvegicus (Rat).